The following is a 3149-amino-acid chain: Large tegument protein deneddylase (3149 aa).

Positions 1-13 (MSNGDWGQSQRTR) are enriched in polar residues. Positions 1-30 (MSNGDWGQSQRTRGTGPVRGIRTMDVNAPG) are disordered. The interval 1-268 (MSNGDWGQSQ…YEANGSGFDL (268 aa)) is deubiquitination activity. The 218-residue stretch at 41 to 258 (LGTASCNQAH…MLEHYGVYDF (218 aa)) folds into the Peptidase C76 domain. Residues cysteine 61, aspartate 193, and histidine 195 contribute to the active site. The tract at residues 319–341 (PAARYSPAKTNSPPSSPASAAPA) is disordered. 8 repeat units span residues 335–339 (PASAA), 340–344 (PASAA), 345–349 (PASAA), 350–354 (PASAA), 355–359 (PASAA), 360–364 (PASAA), 365–369 (PASAA), and 370–374 (PASAA). The interval 335-374 (PASAAPASAAPASAAPASAAPASAAPASAAPASAAPASAA) is 8 X 5 AA repeats of P-A-S-A-A. 8 disordered regions span residues 382 to 656 (FIPI…GSGL), 901 to 923 (LLSGGDQEAGEGGGEPEDNSIYR), 1143 to 1166 (APISPASPSATPANHDNPEATPPL), 1412 to 1434 (GRKEKEKLREQEDKERQERRARE), 1644 to 1677 (PEATNDPGQANLPPPPTIPQATAPPRLASDSALW), 2583 to 2839 (GLVS…PTAV), 2852 to 2981 (AAAS…PGAR), and 2995 to 3019 (QTYTVRKEAPPSAASQLPKMPKCKD). Over residues 462–483 (LPPPVIPIPHQSPPASPTPHPA) the composition is skewed to pro residues. Low complexity-rich tracts occupy residues 509–536 (AAPSNPKIPLTTPSPSPTAAAAPTTTTL) and 544–564 (QPPQSAAPAPSPLLPQQQPTP). The interval 554 to 584 (SPLLPQQQPTPSAAPAPSPLLPQQQPPPSAA) is interaction with inner tegument protein. A compositionally biased stretch (pro residues) spans 565–609 (SAAPAPSPLLPQQQPPPSAARAPSPLPPQQQPLPSATPAPPPAQQ). The segment covering 1143 to 1155 (APISPASPSATPA) has biased composition (low complexity). The segment covering 2592 to 2603 (SADNTPASSDRL) has biased composition (polar residues). Over residues 2711-2720 (QPAPQQPPSS) the composition is skewed to pro residues. Composition is skewed to polar residues over residues 2734 to 2745 (SPHSTPSTASGS) and 2784 to 2804 (SAASLTTFGLQPQDTQASSQD). The segment covering 2812–2827 (MQREKKQQGGREEAAE) has biased composition (basic and acidic residues). Over residues 2874-2885 (APALGSGLAAPA) the composition is skewed to low complexity.

The protein belongs to the herpesviridae large tegument protein family. In terms of assembly, interacts with host CUL1 and CUL4A; these interactions inhibit the E3 ligase activity of cullins. Interacts with inner tegument protein. Interacts with capsid vertex specific component CVC2. Interacts with the major capsid protein/MCP. Interacts with host TRIM25 and YWHAZ.

The protein localises to the virion tegument. Its subcellular location is the host cytoplasm. The protein resides in the host nucleus. It carries out the reaction Thiol-dependent hydrolysis of ester, thioester, amide, peptide and isopeptide bonds formed by the C-terminal Gly of ubiquitin (a 76-residue protein attached to proteins as an intracellular targeting signal).. Its function is as follows. Large tegument protein that plays multiple roles in the viral cycle. During viral entry, remains associated with the capsid while most of the tegument is detached and participates in the capsid transport toward the host nucleus. Plays a role in the routing of the capsid at the nuclear pore complex and subsequent uncoating. Within the host nucleus, acts as a deneddylase and promotes the degradation of nuclear CRLs (cullin-RING ubiquitin ligases) and thereby stabilizes nuclear CRL substrates, while cytoplasmic CRLs remain unaffected. These modifications prevent host cell cycle S-phase progression and create a favorable environment allowing efficient viral genome replication. Participates later in the secondary envelopment of capsids. Indeed, plays a linker role for the association of the outer viral tegument to the capsids together with the inner tegument protein. Counteracts host TLR-mediated NF-kappa-B activation through both MYD88 and TICAM1-dependent pathways by interfering with 'Lys-63'- and 'Lys-48'-linked ubiquitination of signaling intermediates such as TRAF6 and IKBKG. Inhibits type I interferon production by forming a tri-molecular complex with host TRIM25 and 14-3-3 thereby promoting TRIM25 autoubiquitination and sequestration of the ligase into inactive protein aggregates. In turn, host RIGI is recruited to the complex but ubiquitination is severely impaired leading to inhibition of the pathway. Also catalyzes the removal of 'Lys-48'- and 'Lys-63'-linked ubiquitin chains on host TBK1 and STING1 suppressing cGAS-STING signaling in addition to the RIGI-MAVS pathway. Inhibits selective autophagy by deubiquitinating host SQSTM1. In turn, decreased SQSTM1 ubiquitination fails to recruit LC3 to SQSTM1-positive aggregates. In the host nucleus, deubiquitinates topoisomerase II subunits TOP2A and TOP2B thereby stabilizing SUMOylated TOP2 which halts the DNA damage response to TOP2-induced double strand DNA breaks and promotes cell survival. The chain is Large tegument protein deneddylase from Epstein-Barr virus (strain B95-8) (HHV-4).